The primary structure comprises 442 residues: Exodeoxyribonuclease 7 large subunit (442 aa).

It belongs to the XseA family. As to quaternary structure, heterooligomer composed of large and small subunits.

It localises to the cytoplasm. The catalysed reaction is Exonucleolytic cleavage in either 5'- to 3'- or 3'- to 5'-direction to yield nucleoside 5'-phosphates.. Its function is as follows. Bidirectionally degrades single-stranded DNA into large acid-insoluble oligonucleotides, which are then degraded further into small acid-soluble oligonucleotides. This is Exodeoxyribonuclease 7 large subunit from Rickettsia bellii (strain OSU 85-389).